The primary structure comprises 543 residues: Fiber protein (543 aa).

Residues 1 to 36 (MKRTRRSLPANFDPVYPYDAPKPSTQPPFFNDRKGL) form a disordered region.

Belongs to the adenoviridae fiber family. In terms of assembly, homotrimer. Interacts (via N-terminal tail region) with pentons.

The protein localises to the virion. The protein resides in the host nucleus. In terms of biological role, forms spikes that protrude from each vertex of the icosahedral capsid. Interacts with host receptor to provide virion initial attachment to target cell. Fiber proteins are shed during virus entry, when virus is still at the cell surface. In Canine adenovirus serotype 1 (strain CLL) (CAdV-1), this protein is Fiber protein.